The primary structure comprises 143 residues: Large-conductance mechanosensitive channel (143 aa).

A run of 2 helical transmembrane segments spans residues 16–36 (VIDL…VTAL) and 84–104 (INTV…VKLI).

The protein belongs to the MscL family. As to quaternary structure, homopentamer.

The protein localises to the cell inner membrane. Its function is as follows. Channel that opens in response to stretch forces in the membrane lipid bilayer. May participate in the regulation of osmotic pressure changes within the cell. This chain is Large-conductance mechanosensitive channel, found in Xanthomonas campestris pv. campestris (strain 8004).